The primary structure comprises 327 residues: PDZ and LIM domain protein 1 (327 aa).

Position 2 is an N-acetylthreonine (T2). Residues 3 to 85 (TQQIVLQGPG…NMTLTVSRSE (83 aa)) enclose the PDZ domain. S90 and S130 each carry phosphoserine. Y142 is modified (phosphotyrosine). The interval 161–186 (VESKTSASGEEANSRPSAQPHPSGGL) is disordered. The 60-residue stretch at 256–315 (PICDKCGTGIVGVFVKLRDHHRHPECYVCTDCGINLKQKGHFFVGDQIYCEKHARERVTP) folds into the LIM zinc-binding domain. Residues C258, C261, H278, C281, C284, C287, C305, and H308 each contribute to the Zn(2+) site. At T314 the chain carries Phosphothreonine. Y319 carries the phosphotyrosine modification.

As to quaternary structure, interacts with ACTN1. Interacts with ACTN2 and ACTN4. Interacts with PDLIM4. Expressed most abundantly in heart, lung and liver, moderately in spleen and skeletal muscle, and at extremely low levels (if at all) in testis and brain tissues.

It is found in the cytoplasm. Its subcellular location is the cytoskeleton. The protein localises to the myofibril. It localises to the sarcomere. The protein resides in the z line. Cytoskeletal protein that may act as an adapter that brings other proteins (like kinases) to the cytoskeleton. Involved in assembly, disassembly and directioning of stress fibers in fibroblasts. Required for the localization of ACTN1 and PALLD to stress fibers. Required for cell migration and in maintaining cell polarity of fibroblasts. The chain is PDZ and LIM domain protein 1 (Pdlim1) from Rattus norvegicus (Rat).